Consider the following 257-residue polypeptide: 3-deoxy-manno-octulosonate cytidylyltransferase (257 aa).

It belongs to the KdsB family.

The protein resides in the cytoplasm. It carries out the reaction 3-deoxy-alpha-D-manno-oct-2-ulosonate + CTP = CMP-3-deoxy-beta-D-manno-octulosonate + diphosphate. The protein operates within nucleotide-sugar biosynthesis; CMP-3-deoxy-D-manno-octulosonate biosynthesis; CMP-3-deoxy-D-manno-octulosonate from 3-deoxy-D-manno-octulosonate and CTP: step 1/1. It functions in the pathway bacterial outer membrane biogenesis; lipopolysaccharide biosynthesis. Its function is as follows. Activates KDO (a required 8-carbon sugar) for incorporation into bacterial lipopolysaccharide in Gram-negative bacteria. This chain is 3-deoxy-manno-octulosonate cytidylyltransferase, found in Chromohalobacter salexigens (strain ATCC BAA-138 / DSM 3043 / CIP 106854 / NCIMB 13768 / 1H11).